The chain runs to 141 residues: Large ribosomal subunit protein uL22 (141 aa).

A disordered region spans residues Lys108–Ser141. Residues Lys117–Lys134 show a composition bias toward low complexity.

The protein belongs to the universal ribosomal protein uL22 family. In terms of assembly, part of the 50S ribosomal subunit.

In terms of biological role, this protein binds specifically to 23S rRNA; its binding is stimulated by other ribosomal proteins, e.g. L4, L17, and L20. It is important during the early stages of 50S assembly. It makes multiple contacts with different domains of the 23S rRNA in the assembled 50S subunit and ribosome. The globular domain of the protein is located near the polypeptide exit tunnel on the outside of the subunit, while an extended beta-hairpin is found that lines the wall of the exit tunnel in the center of the 70S ribosome. The sequence is that of Large ribosomal subunit protein uL22 from Campylobacter jejuni subsp. jejuni serotype O:2 (strain ATCC 700819 / NCTC 11168).